Reading from the N-terminus, the 715-residue chain is Phosphoribosylformylglycinamidine synthase subunit PurL (715 aa).

Histidine 33 is an active-site residue. Residue tyrosine 36 coordinates ATP. Glutamate 77 contacts Mg(2+). Substrate-binding positions include 78 to 81 (SHNH) and arginine 100. Residue histidine 79 is the Proton acceptor of the active site. Aspartate 101 contacts Mg(2+). Glutamine 225 is a substrate binding site. Position 253 (aspartate 253) interacts with Mg(2+). Substrate is bound at residue 297–299 (ESQ). The ATP site is built by asparagine 476 and glycine 513. Asparagine 514 is a binding site for Mg(2+). Serine 516 is a binding site for substrate.

The protein belongs to the FGAMS family. In terms of assembly, monomer. Part of the FGAM synthase complex composed of 1 PurL, 1 PurQ and 2 PurS subunits.

It localises to the cytoplasm. The catalysed reaction is N(2)-formyl-N(1)-(5-phospho-beta-D-ribosyl)glycinamide + L-glutamine + ATP + H2O = 2-formamido-N(1)-(5-O-phospho-beta-D-ribosyl)acetamidine + L-glutamate + ADP + phosphate + H(+). Its pathway is purine metabolism; IMP biosynthesis via de novo pathway; 5-amino-1-(5-phospho-D-ribosyl)imidazole from N(2)-formyl-N(1)-(5-phospho-D-ribosyl)glycinamide: step 1/2. In terms of biological role, part of the phosphoribosylformylglycinamidine synthase complex involved in the purines biosynthetic pathway. Catalyzes the ATP-dependent conversion of formylglycinamide ribonucleotide (FGAR) and glutamine to yield formylglycinamidine ribonucleotide (FGAM) and glutamate. The FGAM synthase complex is composed of three subunits. PurQ produces an ammonia molecule by converting glutamine to glutamate. PurL transfers the ammonia molecule to FGAR to form FGAM in an ATP-dependent manner. PurS interacts with PurQ and PurL and is thought to assist in the transfer of the ammonia molecule from PurQ to PurL. The polypeptide is Phosphoribosylformylglycinamidine synthase subunit PurL (Methanosarcina barkeri (strain Fusaro / DSM 804)).